The chain runs to 460 residues: Hemopexin (460 aa).

An N-terminal signal peptide occupies residues 1-23 (MARTVVALNILVLLGLCWSLAVA). N-linked (GlcNAc...) asparagine glycosylation is found at Asn38 and Asn64. Disulfide bonds link Cys50–Cys230, Cys148–Cys153, and Cys187–Cys199. Hemopexin repeat units lie at residues 53-93 (AWSF…WKNP), 94-138 (VTSV…FPGI), 139-183 (PYPP…SWPA), and 184-230 (VGNC…FISC). A heme-binding site is contributed by His79. His149 contacts heme. Asn186 carries N-linked (GlcNAc...) asparagine glycosylation. His235 provides a ligand contact to heme. 2 N-linked (GlcNAc...) asparagine glycosylation sites follow: Asn240 and Asn246. Cystine bridges form between Cys255-Cys458, Cys364-Cys406, and Cys416-Cys433. Hemopexin repeat units follow at residues 257–302 (ADPG…WPQG), 303–350 (PSAV…LGSP), 355–394 (LDTI…WAEL), and 398–448 (HEKV…SLPQ). His291 provides a ligand contact to heme.

Belongs to the hemopexin family. In terms of tissue distribution, expressed by the liver and secreted in plasma.

The protein resides in the secreted. Functionally, binds heme and transports it to the liver for breakdown and iron recovery, after which the free hemopexin returns to the circulation. In Rattus norvegicus (Rat), this protein is Hemopexin (Hpx).